Reading from the N-terminus, the 661-residue chain is uncharacterized protein (661 aa).

The next 7 helical transmembrane spans lie at 37–57 (VFLG…LFLS), 87–107 (INSP…AVFI), 120–140 (WLLL…NVIL), 158–178 (VFWQ…PIIV), 243–263 (LLDI…LYTI), 266–286 (TLMW…IAIG), and 341–361 (FNLL…YNYF). The 288-residue stretch at 123 to 410 (LGVLLSLLFV…VTNQIQNITE (288 aa)) folds into the ABC transmembrane type-1 domain. One can recognise an ABC transporter domain in the interval 453-659 (VALENVTLSP…AEGRWQISPI (207 aa)). 487–494 (GPSGSGKS) serves as a coordination point for ATP.

The protein belongs to the ABC transporter superfamily.

It is found in the cell inner membrane. This is an uncharacterized protein from Synechocystis sp. (strain ATCC 27184 / PCC 6803 / Kazusa).